The following is a 342-amino-acid chain: Holliday junction branch migration complex subunit RuvB (342 aa).

The disordered stretch occupies residues 1-21; sequence MSVEHSPVDPSAEPPEKAEEA. The segment at 1–184 is large ATPase domain (RuvB-L); the sequence is MSVEHSPVDP…FGFTAQLDYY (184 aa). ATP is bound by residues Leu23, Arg24, Gly65, Lys68, Thr69, Thr70, 131–133, Arg174, Tyr184, and Arg221; that span reads EDF. Thr69 serves as a coordination point for Mg(2+). The segment at 185–255 is small ATPAse domain (RuvB-S); sequence EVADLERIVT…GAETALDLYE (71 aa). The interval 258–342 is head domain (RuvB-H); sequence PLGLDRLDRA…PPDSSGEGLF (85 aa). Arg313 and Arg318 together coordinate DNA.

The protein belongs to the RuvB family. Homohexamer. Forms an RuvA(8)-RuvB(12)-Holliday junction (HJ) complex. HJ DNA is sandwiched between 2 RuvA tetramers; dsDNA enters through RuvA and exits via RuvB. An RuvB hexamer assembles on each DNA strand where it exits the tetramer. Each RuvB hexamer is contacted by two RuvA subunits (via domain III) on 2 adjacent RuvB subunits; this complex drives branch migration. In the full resolvosome a probable DNA-RuvA(4)-RuvB(12)-RuvC(2) complex forms which resolves the HJ.

It localises to the cytoplasm. It carries out the reaction ATP + H2O = ADP + phosphate + H(+). In terms of biological role, the RuvA-RuvB-RuvC complex processes Holliday junction (HJ) DNA during genetic recombination and DNA repair, while the RuvA-RuvB complex plays an important role in the rescue of blocked DNA replication forks via replication fork reversal (RFR). RuvA specifically binds to HJ cruciform DNA, conferring on it an open structure. The RuvB hexamer acts as an ATP-dependent pump, pulling dsDNA into and through the RuvAB complex. RuvB forms 2 homohexamers on either side of HJ DNA bound by 1 or 2 RuvA tetramers; 4 subunits per hexamer contact DNA at a time. Coordinated motions by a converter formed by DNA-disengaged RuvB subunits stimulates ATP hydrolysis and nucleotide exchange. Immobilization of the converter enables RuvB to convert the ATP-contained energy into a lever motion, pulling 2 nucleotides of DNA out of the RuvA tetramer per ATP hydrolyzed, thus driving DNA branch migration. The RuvB motors rotate together with the DNA substrate, which together with the progressing nucleotide cycle form the mechanistic basis for DNA recombination by continuous HJ branch migration. Branch migration allows RuvC to scan DNA until it finds its consensus sequence, where it cleaves and resolves cruciform DNA. The chain is Holliday junction branch migration complex subunit RuvB from Cutibacterium acnes (strain DSM 16379 / KPA171202) (Propionibacterium acnes).